Reading from the N-terminus, the 111-residue chain is Repressed By RIM101 protein 1 (111 aa).

Positions 1–19 are cleaved as a signal peptide; that stretch reads MKFSTTLLALTASIAAVMS. The interval 71-90 is disordered; sequence SGASSATGGSSAAKSGSSSG. The GPI-anchor amidated serine moiety is linked to residue serine 81. A propeptide spans 82–111 (removed in mature form); that stretch reads AAKSGSSSGAGFAPVAGAGSLAAIAGLLLL.

In terms of processing, the GPI-anchor is attached to the protein in the endoplasmic reticulum and serves to target the protein to the cell surface. There, the glucosamine-inositol phospholipid moiety is cleaved off and the GPI-modified mannoprotein is covalently attached via its lipidless GPI glycan remnant to the 1,6-beta-glucan of the outer cell wall layer.

The protein localises to the secreted. The protein resides in the cell wall. It localises to the membrane. Functionally, probable cell wall protein required for filamentation at low pH. This is Repressed By RIM101 protein 1 (RBR1) from Candida albicans (strain SC5314 / ATCC MYA-2876) (Yeast).